The chain runs to 89 residues: Small ribosomal subunit protein bS20 (89 aa).

It belongs to the bacterial ribosomal protein bS20 family.

Functionally, binds directly to 16S ribosomal RNA. This is Small ribosomal subunit protein bS20 from Xanthobacter autotrophicus (strain ATCC BAA-1158 / Py2).